A 1235-amino-acid polypeptide reads, in one-letter code: MNMLHLSDRNASLAPSGGEHSLPTGGAVCRDAMDILPVILRAPVALLLLLVVLPQLSVGAEANVTVKVLSATWNWYMPRKYVTAINAGFNASLKSRNWTVAGSVNVQVVYPSNLDLMPEDFIKKQLELETDQNKIVIVYGPLGDKSVMHSIPHLMNHRVVAFGLITGSTFIRQWNPYLYFLRADPAAETLVLIRYSLCQLRVLRLGFMYLQGVHYGDEEYALTVNVMSRMGYELHGVFTVMSPDGKPAPDAEFKEVFERFATALPQAIIVFGAPVDDTAKFLMMMAVDERIARSYILSPSSVQLSLIEMWQLALEAAGASFAPGQLLFTGTNPLAKDSQYTAIKRFQEVMSEYLKAHVGETNITEADYFLTHDLEGELMVYGWISGEVLSQALSNLEWLKDRATFVRSLYDQRRYVINDIVIGDYGGTCEGDAAKHGATCECNQGSKAVYVKEMLENGQKTSVRSGFTVLKASLCYTDSSELHGPLDGLVVFMKDDDIASKAAALWQKGTSHLVGKGDLGYSDRFFLHAFNTTIAEAANDLRRDQGERIVTAVFGPVTEAMLDTPNITFIDPLELKPRLNKFRRNVIHLSPTLEQQLYVLSSYLAGAGVGNVDAVICSNEADGIADFLRSSLTEFAVSLRSAVIREDGEDVGKYLPMSGTVFVIGLSVPDVKEIARKLEERNDLRVIVLFGEFSFLYDLFATALNNTAGAARLVFATSLPHWGDTETSSKTAQLFHDVEKDSRLWTPLSVLAFATGRLMRVILLHVEEMSPETLVNFFYTDSSIVSDDMRYGVFDDTKCVDTANKLSKNGCASNYGATQISVWSMARALNASIPPLTNPMTPSMTFRNSNAGRISGASLVGIIIGGALALFLVVALGVVPYFFLRNTVITICTKDDRPVTLIFTDIESSTALWAAHPEVMPDAVATHHRLIRTLISKYECYEVKTVGDSFMIASKSPFAAVQLAQELQLCFLHHDWGTNAIDESYQQFEQQRAEDDSDYTPPTARLDPKVYSRLWNGLRVRVGIHTGLCDIRRDEVTKGYDYYGRTSNMAARTESVANGGQVLMTHAAYMSLSAEERQQIDVTALGDVPLRGVPKPVEMYRLNAVPGRTFSVLRLELELLNDDEDQTTTSCSDHSSSRTDLSVAAQTIAASLQSLLGTFTPAQRQKALIPFCERWRVPLPQKVGNVWDDDGCQEVVRRVAAKVGRVMDFGTRKPSSSVTSWKGVEVSSQVEERLL.

Residues 1-20 are disordered; sequence MNMLHLSDRNASLAPSGGEH. Residues 1–32 lie on the Cytoplasmic side of the membrane; sequence MNMLHLSDRNASLAPSGGEHSLPTGGAVCRDA. A helical membrane pass occupies residues 33–53; it reads MDILPVILRAPVALLLLLVVL. At 54-858 the chain is on the extracellular side; it reads PQLSVGAEAN…SNAGRISGAS (805 aa). Asn63, Asn90, Asn97, Asn362, Asn531, Asn566, Asn705, and Asn830 each carry an N-linked (GlcNAc...) asparagine glycan. The chain crosses the membrane as a helical span at residues 859–879; it reads LVGIIIGGALALFLVVALGVV. The Cytoplasmic portion of the chain corresponds to 880 to 1235; sequence PYFFLRNTVI…VSSQVEERLL (356 aa). In terms of domain architecture, Guanylate cyclase spans 900–1054; the sequence is TLIFTDIESS…RTSNMAARTE (155 aa). Residues Asp905 and Asp948 each contribute to the Mg(2+) site.

The protein belongs to the adenylyl cyclase class-3 family. Mg(2+) serves as cofactor.

The protein localises to the membrane. It catalyses the reaction ATP = 3',5'-cyclic AMP + diphosphate. Could act as a receptor for an unknown ligand. In Trypanosoma brucei brucei, this protein is Receptor-type adenylate cyclase ESAG 4 (ESAG4).